A 756-amino-acid polypeptide reads, in one-letter code: Serine/threonine-protein kinase DCLK1 (756 aa).

A phosphoserine mark is found at Ser-32 and Ser-36. Thr-46 is subject to Phosphothreonine. 2 consecutive Doublecortin domains span residues 57 to 143 (KKVR…LEYT) and 186 to 269 (KLVT…QDDF). Residues 288–393 (ASASRRGTTK…QRGWRREESE (106 aa)) are disordered. Over residues 297-313 (KSPGPSRRSKSPASTSS) the composition is skewed to low complexity. A phosphoserine mark is found at Ser-305, Ser-307, Ser-330, Ser-332, Ser-334, Ser-337, Ser-347, Ser-352, Ser-353, Ser-355, Ser-358, Cys-362, and Ser-364. A compositionally biased stretch (low complexity) spans 347–364 (SQHGGSSTSLSSTKVCSS). The span at 366 to 375 (DENDGPGEGD) shows a compositional bias: acidic residues. Phosphoserine is present on Ser-392. A Protein kinase domain is found at 406–663 (YKVGRTIGDG…AVQVLEHPWV (258 aa)). ATP contacts are provided by residues 412 to 420 (IGDGNFAVV) and Lys-435. The Proton acceptor role is filled by Asp-527. Tyr-536 carries the post-translational modification Phosphotyrosine. The segment covering 711-723 (QVFRRRRNQDVRS) has biased composition (basic and acidic residues). A disordered region spans residues 711–756 (QVFRRRRNQDVRSRYKAQPAPPELNSESEDYSPSSSETVRSPNSPF). Phosphoserine is present on residues Ser-742, Ser-751, and Ser-754.

This sequence belongs to the protein kinase superfamily. CAMK Ser/Thr protein kinase family. CaMK subfamily.

The catalysed reaction is L-seryl-[protein] + ATP = O-phospho-L-seryl-[protein] + ADP + H(+). The enzyme catalyses L-threonyl-[protein] + ATP = O-phospho-L-threonyl-[protein] + ADP + H(+). Functionally, probable kinase that may be involved in a calcium-signaling pathway controlling neuronal migration in the developing brain. May also participate in functions of the mature nervous system. In Mus musculus (Mouse), this protein is Serine/threonine-protein kinase DCLK1 (Dclk1).